The following is a 456-amino-acid chain: UDP-glycosyltransferase 74D1 (456 aa).

UDP-alpha-D-glucose-binding positions include Ser279, 332–334 (SPQ), 349–357 (HCGWNSTLE), and 371–374 (YSDQ).

This sequence belongs to the UDP-glycosyltransferase family. In terms of tissue distribution, expressed in leaves.

Glucosyltransferase that glucosylates jasmonate (JA) and JA derivatives. Also active on indole-3-acetic acid (IAA), 4-coumrate, cinnamate and caffeate. The sequence is that of UDP-glycosyltransferase 74D1 (UGT74D1) from Arabidopsis thaliana (Mouse-ear cress).